Here is a 275-residue protein sequence, read N- to C-terminus: MQCHRDLALSQALWGWQLSKQSGWAHPSLPHSPLPSTVHSCSWAPPHLQRHLPLATVSPGTTQLTQGPAGRTLGQTQASCPEPRPSMDAVDATMEKLRAQCLSRGASGIQGLARFFRQLDRDGSRSLDADEFRQGLAKLGLVLDQAEAEGVCRKWDRNGSGTLDLEEFLRALRPPMSQAREAVIAAAFAKLDRSGDGVVTVDDLRGVYSGRAHPKVRSGEWTEDEVLRRFLDNFDSSEKDGQVTLAEFQDYYSGVSASMNTDEEFVAMMTSAWQL.

Positions 59–87 (PGTTQLTQGPAGRTLGQTQASCPEPRPSM) are disordered. EF-hand domains lie at 107–142 (SGIQGLARFFRQLDRDGSRSLDADEFRQGLAKLGLV), 143–178 (LDQAEAEGVCRKWDRNGSGTLDLEEFLRALRPPMSQ), 179–214 (AREAVIAAAFAKLDRSGDGVVTVDDLRGVYSGRAHP), and 222–258 (TEDEVLRRFLDNFDSSEKDGQVTLAEFQDYYSGVSAS). Residues D120, D122, S124, S126, E131, D156, N158, S160, T162, E167, D192, S194, D196, and D203 each coordinate Ca(2+). Position 126 is a phosphoserine; by PKA (S126).

Monomer. Does not form oligomers in the presence of calcium.

Its subcellular location is the cytoplasm. Functionally, calcium-binding protein. May play a role in cellular signaling events (Potential). The polypeptide is Calcyphosin (Homo sapiens (Human)).